The following is a 386-amino-acid chain: CUE domain-containing protein 1 (386 aa).

Low complexity predominate over residues 1-10 (MTSLFRRSSS). Residues 1-40 (MTSLFRRSSSGSGGGGTAGARGGGGGTAAPQELNNSRPAR) are disordered. A compositionally biased stretch (gly residues) spans 11–27 (GSGGGGTAGARGGGGGT). The region spanning 46–89 (EFNQAMDDFKTMFPNMDYDIIECVLRANSGAVDATIDQLLQMNL) is the CUE domain. 3 disordered regions span residues 147–172 (LAPPTPPPRIDALGSGAPTSQRRYRN), 195–225 (SIQGNAGGPKPGSGEGCPPAMAGPGPGDQES), and 367–386 (DFRGRRQEAPKVEEGLREGQ). The segment covering 199 to 209 (NAGGPKPGSGE) has biased composition (gly residues).

The protein is CUE domain-containing protein 1 (CUEDC1) of Homo sapiens (Human).